Consider the following 338-residue polypeptide: Large ribosomal subunit protein uL10 (338 aa).

A compositionally biased stretch (basic and acidic residues) spans 309–327 (KAEVEEAKEEEKEEKKEEA). Residues 309 to 338 (KAEVEEAKEEEKEEKKEEAAPAAAGLGLLF) are disordered.

It belongs to the universal ribosomal protein uL10 family. Part of the 50S ribosomal subunit. Forms part of the ribosomal stalk which helps the ribosome interact with GTP-bound translation factors. Forms a heptameric L10(L12)2(L12)2(L12)2 complex, where L10 forms an elongated spine to which the L12 dimers bind in a sequential fashion.

Functionally, forms part of the ribosomal stalk, playing a central role in the interaction of the ribosome with GTP-bound translation factors. This is Large ribosomal subunit protein uL10 from Methanothermococcus thermolithotrophicus (Methanococcus thermolithotrophicus).